A 137-amino-acid chain; its full sequence is Large ribosomal subunit protein uL16 (137 aa).

This sequence belongs to the universal ribosomal protein uL16 family. Part of the 50S ribosomal subunit.

Binds 23S rRNA and is also seen to make contacts with the A and possibly P site tRNAs. This chain is Large ribosomal subunit protein uL16, found in Agrobacterium fabrum (strain C58 / ATCC 33970) (Agrobacterium tumefaciens (strain C58)).